The sequence spans 496 residues: Acyltransferase M4 (496 aa).

His163 functions as the Proton acceptor in the catalytic mechanism.

Belongs to the plant acyltransferase family. Monomer.

It participates in secondary metabolite biosynthesis. Acyltransferase; part of the gene cluster that mediates the biosynthesis of squalestatin S1 (SQS1, also known as zaragozic acid A), a heavily oxidized fungal polyketide that offers potent cholesterol lowering activity by targeting squalene synthase (SS). SQS1 is composed of a 2,8-dioxobicyclic[3.2.1]octane-3,4,5-tricarboxyclic acid core that is connected to two lipophilic polyketide arms. These initial steps feature the priming of an unusual benzoic acid starter unit onto the highly reducing polyketide synthase pks2, followed by oxaloacetate extension and product release to generate a tricarboxylic acid containing product. The phenylalanine ammonia lyase (PAL) M7 and the acyl-CoA ligase M9 are involved in transforming phenylalanine into benzoyl-CoA. The citrate synthase-like protein R3 is involved in connecting the C-alpha-carbons of the hexaketide chain and oxaloacetate to afford the tricarboxylic acid unit. The potential hydrolytic enzymes, M8 and M10, are in close proximity to pks2 and may participate in product release. On the other side, the tetraketide arm is synthesized by a the squalestatin tetraketide synthase pks1 and enzymatically esterified to the core in the last biosynthetic step, by the acetyltransferase M4. The biosynthesis of the tetraketide must involve 3 rounds of chain extension. After the first and second rounds methyl-transfer occurs, and in all rounds of extension the ketoreductase and dehydratase are active. The enoyl reductase and C-MeT of pks1 are not active in the final round of extension. The acetyltransferase M4 appears to have a broad substrate selectivity for its acyl CoA substrate, allowing the in vitro synthesis of novel squalestatins. The biosynthesis of SQS1 requires several oxidative steps likely performed by oxidoreductases M1, R1 and R2. Finally, in support of the identification of the cluster as being responsible for SQS1 production, the cluster contains a gene encoding a putative squalene synthase (SS) R6, suggesting a likely mechanism for self-resistance. The chain is Acyltransferase M4 from Phoma sp. (strain ATCC 20986 / MF5453).